Reading from the N-terminus, the 251-residue chain is Adenylate kinase (251 aa).

46–51 (GAGKGT) lines the ATP pocket. The NMP stretch occupies residues 66-95 (ATGDMLRSQVQQQTPLGVEAKKIMDAGGLV). AMP is bound by residues threonine 67, arginine 72, 93–95 (GLV), 122–125 (GFPR), and glutamine 129. Residues 163–200 (GRLVHPASGRSYHKVFNPPKKEMIDDITGEALVQRSDD) are LID. ATP contacts are provided by residues arginine 164 and 173–174 (SY). 2 residues coordinate AMP: arginine 197 and arginine 208. Glutamine 236 lines the ATP pocket.

The protein belongs to the adenylate kinase family. AK2 subfamily. In terms of assembly, monomer.

It localises to the cytoplasm. Its subcellular location is the cytosol. It is found in the mitochondrion intermembrane space. It catalyses the reaction AMP + ATP = 2 ADP. Catalyzes the reversible transfer of the terminal phosphate group between ATP and AMP. Plays an important role in cellular energy homeostasis and in adenine nucleotide metabolism. Adenylate kinase activity is critical for regulation of the phosphate utilization and the AMP de novo biosynthesis pathways. This chain is Adenylate kinase, found in Yarrowia lipolytica (strain CLIB 122 / E 150) (Yeast).